The sequence spans 305 residues: Aspartate carbamoyltransferase catalytic subunit (305 aa).

2 residues coordinate carbamoyl phosphate: Arg56 and Thr57. Lys84 is a binding site for L-aspartate. 3 residues coordinate carbamoyl phosphate: Arg106, His136, and Gln139. L-aspartate is bound by residues Arg169 and Arg221. Residues Ala262 and Pro263 each contribute to the carbamoyl phosphate site.

Belongs to the aspartate/ornithine carbamoyltransferase superfamily. ATCase family. Heterododecamer (2C3:3R2) of six catalytic PyrB chains organized as two trimers (C3), and six regulatory PyrI chains organized as three dimers (R2).

The enzyme catalyses carbamoyl phosphate + L-aspartate = N-carbamoyl-L-aspartate + phosphate + H(+). Its pathway is pyrimidine metabolism; UMP biosynthesis via de novo pathway; (S)-dihydroorotate from bicarbonate: step 2/3. Functionally, catalyzes the condensation of carbamoyl phosphate and aspartate to form carbamoyl aspartate and inorganic phosphate, the committed step in the de novo pyrimidine nucleotide biosynthesis pathway. The chain is Aspartate carbamoyltransferase catalytic subunit from Streptococcus sanguinis (strain SK36).